The chain runs to 608 residues: MSSALAYMLLVLSISLLNGQSPPGKPEIHKCRSPDKETFTCWWNPGSDGGLPTNYSLTYSKEGEKNTYECPDYKTSGPNSCFFSKQYTSIWKIYIITVNATNEMGSSTSDPLYVDVTYIVEPEPPRNLTLEVKQLKDKKTYLWVKWLPPTITDVKTGWFTMEYEIRLKSEEADEWEIHFTGHQTQFKVFDLYPGQKYLVQTRCKPDHGYWSRWGQEKSIEIPNDFTLKDTTVWIIVAVLSAVICLIMVWAVALKGYSMMTCIFPPVPGPKIKGFDTHLLEKGKSEELLSALGCQDFPPTSDCEDLLVEFLEVDDNEDERLMPSHSKEYPGQGVKPTHLDPDSDSGHGSYDSHSLLSEKCEEPQAYPPAFHIPEITEKPENPEANIPPTPNPQNNTPNCHTDTSKSTTWPLPPGQHTRRSPYHSIADVCKLAGSPGDTLDSFLDKAEENVLKLSEDAGEEEVAVQEGAKSFPSDKQNTSWPPLQEKGPIVYAKPPDYVEIHKVNKDGVLSLLPKQRENHQTENPGVPETSKEYAKVSGVTDNNILVLVPDSRAQNTALLEESAKKVPPSLEQNQSEKDLASFTATSSNCRLQLGRLDYLDPTCFMHSFH.

The first 19 residues, 1–19 (MSSALAYMLLVLSISLLNG), serve as a signal peptide directing secretion. At 20–229 (QSPPGKPEIH…EIPNDFTLKD (210 aa)) the chain is on the extracellular side. Fibronectin type-III domains are found at residues 22-122 (PPGK…IVEP) and 124-224 (PPRN…IPND). Cys31 and Cys41 are joined by a disulfide. Asn54 carries N-linked (GlcNAc...) asparagine glycosylation. Cys70 and Cys81 are disulfide-bonded. 2 N-linked (GlcNAc...) asparagine glycosylation sites follow: Asn99 and Asn127. Zn(2+) contacts are provided by Asp206 and His207. The short motif at 210–214 (WSRWG) is the WSXWS motif element. A helical transmembrane segment spans residues 230–253 (TTVWIIVAVLSAVICLIMVWAVAL). The Cytoplasmic portion of the chain corresponds to 254-608 (KGYSMMTCIF…DPTCFMHSFH (355 aa)). The Box 1 motif motif lies at 262-270 (IFPPVPGPK). 3 disordered regions span residues 317-355 (DERL…HSLL), 377-419 (KPEN…TRRS), and 466-487 (GAKS…EKGP). The segment covering 318–327 (ERLMPSHSKE) has biased composition (basic and acidic residues). The span at 345–354 (GHGSYDSHSL) shows a compositional bias: low complexity. Positions 398 to 408 (CHTDTSKSTTW) are enriched in polar residues.

It belongs to the type I cytokine receptor family. Type 1 subfamily. As to quaternary structure, interacts with SMARCA1. Interacts with NEK3 and VAV2 and this interaction is prolactin-dependent.

Its subcellular location is the membrane. Functionally, this is a receptor for the anterior pituitary hormone prolactin. In Mus musculus (Mouse), this protein is Prolactin receptor (Prlr).